The primary structure comprises 84 residues: Small ribosomal subunit protein uS17 (84 aa).

The protein belongs to the universal ribosomal protein uS17 family. As to quaternary structure, part of the 30S ribosomal subunit.

Functionally, one of the primary rRNA binding proteins, it binds specifically to the 5'-end of 16S ribosomal RNA. The protein is Small ribosomal subunit protein uS17 of Vibrio vulnificus (strain CMCP6).